The following is a 122-amino-acid chain: Large ribosomal subunit protein uL14 (122 aa).

Belongs to the universal ribosomal protein uL14 family. Part of the 50S ribosomal subunit. Forms a cluster with proteins L3 and L19. In the 70S ribosome, L14 and L19 interact and together make contacts with the 16S rRNA in bridges B5 and B8.

Binds to 23S rRNA. Forms part of two intersubunit bridges in the 70S ribosome. The polypeptide is Large ribosomal subunit protein uL14 (Staphylococcus epidermidis (strain ATCC 35984 / DSM 28319 / BCRC 17069 / CCUG 31568 / BM 3577 / RP62A)).